The sequence spans 450 residues: Glucose-6-phosphate isomerase (450 aa).

The active-site Proton donor is glutamate 291. Catalysis depends on residues histidine 312 and lysine 426.

Belongs to the GPI family.

It is found in the cytoplasm. It carries out the reaction alpha-D-glucose 6-phosphate = beta-D-fructose 6-phosphate. It functions in the pathway carbohydrate biosynthesis; gluconeogenesis. The protein operates within carbohydrate degradation; glycolysis; D-glyceraldehyde 3-phosphate and glycerone phosphate from D-glucose: step 2/4. Functionally, catalyzes the reversible isomerization of glucose-6-phosphate to fructose-6-phosphate. The sequence is that of Glucose-6-phosphate isomerase from Clostridium botulinum (strain Hall / ATCC 3502 / NCTC 13319 / Type A).